Consider the following 48-residue polypeptide: Cuticle protein 10 (48 aa).

The chain is Cuticle protein 10 from Limulus polyphemus (Atlantic horseshoe crab).